The primary structure comprises 384 residues: Cytochrome b (384 aa).

The next 4 helical transmembrane spans lie at 32-52, 76-98, 113-133, and 179-199; these read FGSLLGVCLVMQLCTGMFLAM, WLLRYAHSNGAGFFFMFVYLHMA, LWNMGVMMFLLMMMTAFMGYC, and FFSLHYLLPFVIAGICCLHLL. The heme b site is built by histidine 82 and histidine 96. Heme b contacts are provided by histidine 183 and histidine 197. An a ubiquinone-binding site is contributed by histidine 202. 4 helical membrane-spanning segments follow: residues 225–245, 289–309, 321–341, and 348–368; these read FLFKDTVTIFAFLFVYFFLIS, MMGVLAMLFAILILFVLPFVD, LSKILFGFFCVNFILLGLIGA, and YIIIGQLATIFYFSYFMILLP.

Belongs to the cytochrome b family. As to quaternary structure, fungal cytochrome b-c1 complex contains 10 subunits; 3 respiratory subunits, 2 core proteins and 5 low-molecular weight proteins. Cytochrome b-c1 complex is a homodimer. It depends on heme b as a cofactor.

The protein resides in the mitochondrion inner membrane. Component of the ubiquinol-cytochrome c reductase complex (complex III or cytochrome b-c1 complex) that is part of the mitochondrial respiratory chain. The b-c1 complex mediates electron transfer from ubiquinol to cytochrome c. Contributes to the generation of a proton gradient across the mitochondrial membrane that is then used for ATP synthesis. This chain is Cytochrome b (COB), found in Starmerella bacillaris (Yeast).